A 714-amino-acid polypeptide reads, in one-letter code: Fatty acid oxidation complex subunit alpha (714 aa).

The segment at 1-190 (MEMTSAFTLN…KLGLVDDVVP (190 aa)) is enoyl-CoA hydratase. A 3-hydroxyacyl-CoA dehydrogenase region spans residues 306-714 (APLNSVGILG…FWKTTATDLQ (409 aa)).

It in the N-terminal section; belongs to the enoyl-CoA hydratase/isomerase family. In the central section; belongs to the 3-hydroxyacyl-CoA dehydrogenase family. Heterotetramer of two alpha chains (FadJ) and two beta chains (FadI).

Its subcellular location is the cytoplasm. The enzyme catalyses a (3S)-3-hydroxyacyl-CoA = a (2E)-enoyl-CoA + H2O. The catalysed reaction is a 4-saturated-(3S)-3-hydroxyacyl-CoA = a (3E)-enoyl-CoA + H2O. It carries out the reaction a (3S)-3-hydroxyacyl-CoA + NAD(+) = a 3-oxoacyl-CoA + NADH + H(+). It catalyses the reaction (3S)-3-hydroxybutanoyl-CoA = (3R)-3-hydroxybutanoyl-CoA. It participates in lipid metabolism; fatty acid beta-oxidation. Functionally, catalyzes the formation of a hydroxyacyl-CoA by addition of water on enoyl-CoA. Also exhibits 3-hydroxyacyl-CoA epimerase and 3-hydroxyacyl-CoA dehydrogenase activities. The sequence is that of Fatty acid oxidation complex subunit alpha from Escherichia coli O8 (strain IAI1).